A 443-amino-acid chain; its full sequence is Thymidine phosphorylase (443 aa).

The protein belongs to the thymidine/pyrimidine-nucleoside phosphorylase family. As to quaternary structure, homodimer.

It carries out the reaction thymidine + phosphate = 2-deoxy-alpha-D-ribose 1-phosphate + thymine. It participates in pyrimidine metabolism; dTMP biosynthesis via salvage pathway; dTMP from thymine: step 1/2. Functionally, the enzymes which catalyze the reversible phosphorolysis of pyrimidine nucleosides are involved in the degradation of these compounds and in their utilization as carbon and energy sources, or in the rescue of pyrimidine bases for nucleotide synthesis. In Shewanella putrefaciens (strain CN-32 / ATCC BAA-453), this protein is Thymidine phosphorylase.